The sequence spans 350 residues: Tsukushi (350 aa).

An N-terminal signal peptide occupies residues 1-17 (MAPSWLFLLFIPGMVGS). In terms of domain architecture, LRRNT spans 18 to 59 (SRSCFPGCQCIVDNFGLFHSFSLTKVDCSGVGPHVVPVSIPL). LRR repeat units follow at residues 60–81 (DTSYLDLSANGIKRINESVLSG), 86–107 (TLINLNLSHNQIVRISFSTFSK), 110–131 (YLESLDLSHNLLETLPDGSFLY), 133–154 (RLTELDLSSNKLLEVGIGAFTL), 159–180 (RSMTINLGNNNIRSIHRGAERP), 183–203 (NIHSLTLSGNDLLSVPDLHGI), 204–225 (PLRHLDLDRNPLAKIEKESFLG), 228–250 (GLTHLSLSDLPNLREVSPYSFKT), 253–275 (SLLDLDLSSNPQLKSLSSDMFFG), and 278–299 (SLQELNLAYSGVAALPKDIMLN). N-linked (GlcNAc...) asparagine glycosylation is found at Asn75 and Asn91.

As to quaternary structure, interacts with bmp4. Interacts with dll1 (via extracellular region). Interacts with fgf8; inhibits fgf8 signaling. Interacts with nodal2/Xnr2; enhances nodal2 activity.

Its subcellular location is the secreted. Contributes to various developmental events through its interactions with multiple signaling pathways. Dorsalizing factor which functions as an inhibitor of bone morphogenetic proteins (BMP) during gastrulation. Promotes dll1-dependent activation of Notch signaling and is required for neural crest formation. Induces endoderm and dorsal mesoderm formation by enhancing nodal2/Xnr2 activity while inhibiting ventrolateral mesoderm formation through inhibition of fgf8. This Xenopus tropicalis (Western clawed frog) protein is Tsukushi (tsku).